The chain runs to 492 residues: Cobyric acid synthase (492 aa).

A GATase cobBQ-type domain is found at 252 to 440 (QLNVVVPVLT…LHGIFEQTEA (189 aa)). The active-site Nucleophile is cysteine 333. Histidine 432 is a catalytic residue.

Belongs to the CobB/CobQ family. CobQ subfamily.

Its pathway is cofactor biosynthesis; adenosylcobalamin biosynthesis. Catalyzes amidations at positions B, D, E, and G on adenosylcobyrinic A,C-diamide. NH(2) groups are provided by glutamine, and one molecule of ATP is hydrogenolyzed for each amidation. The chain is Cobyric acid synthase from Photobacterium profundum (strain SS9).